The chain runs to 342 residues: Phomopsin biosynthesis cluster protein B (342 aa).

Residues 1–22 are disordered; that stretch reads MESIAKAKSLPNKGRTYDSQRP. The chain crosses the membrane as a helical span at residues 87-107; sequence VLIIGCAVISLFAIIGALGFA. Residues 118-186 form a disordered region; that stretch reads CASPAHQNPH…QCGESPDEAQ (69 aa). The segment covering 144 to 155 has biased composition (low complexity); it reads HSGSHSSSSSTN. Residue N248 is glycosylated (N-linked (GlcNAc...) asparagine).

The protein localises to the membrane. Its function is as follows. Part of the gene cluster that mediates the biosynthesis of the phomopsins, a group of hexapeptide mycotoxins which infects lupins and causes lupinosis disease in livestock. The role of phomB within the phomopsins biosynthesis pathway has still to be determined. The pathway starts with the processing of the precursor phomA by several endopeptidases including kexin proteases as well as the cluster-specific S41 family peptidase phomP1 and the oligopeptidase phomG to produce 10 identical copies of the hexapeptide Tyr-Val-Ile-Pro-Ile-Asp. After being excised from the precursor peptide, the core peptides are cyclized and modified post-translationally by enzymes encoded within the gene cluster. The timing and order of proteolysis of the phomA precursor and PTMs are still unknown. Two tyrosinase-like enzymes, phomQ1 and phomQ2, catalyze the chlorination and hydroxylation of Tyr, respectively. PhomYb, is proposed to be involved in the construction of the macrocyclic structure. The other 4 ustYa family proteins may be involved in PTMs that generate the unique structure of phomopsin A. PhomYa is required for the hydroxylation of C-beta of Tyr. PhomYc, phomYd, and phomYe are responsible for the biosynthesis of 2,3-dehydroisoleucine (dIle), 2,3-dehydroaspartic acid (dAsp), and 3,4-dehydroproline (dPro), respectively. While dIle formation by phomYc is indispensable for the installation of dAsp by phomYd, the order of the other PTMs have not been elucidated yet. Most of the biosynthetic enzymes likely have broad substrate specificity, and thus, there might be a metabolic grid from a precursor to phomopsin A. The enzyme(s) responsible for the biosynthesis of 3,4-dehydrovaline (dVal) have also not been identified yet. Finally, phomM acts as an S-adenosylmethionine-dependent alpha-N-methyltransferase that catalyzes two successive N-methylation reactions, converting N-desmethyl-phomopsin A to phomopsin A and phomopsin A further to an N,N-dimethylated congener called phomopsin E. The sequence is that of Phomopsin biosynthesis cluster protein B from Diaporthe leptostromiformis (Lupinosis disease fungus).